The chain runs to 96 residues: Putative membrane protein insertion efficiency factor (96 aa).

Residues 71–84 are compositionally biased toward low complexity; that stretch reads THGTAAAPPASAAP. The tract at residues 71–96 is disordered; that stretch reads THGTAAAPPASAAPGRPPVTVRLPRP.

The protein belongs to the UPF0161 family.

The protein resides in the cell inner membrane. Functionally, could be involved in insertion of integral membrane proteins into the membrane. The polypeptide is Putative membrane protein insertion efficiency factor (Cupriavidus metallidurans (strain ATCC 43123 / DSM 2839 / NBRC 102507 / CH34) (Ralstonia metallidurans)).